We begin with the raw amino-acid sequence, 97 residues long: Serine protease inhibitor Kazal-type 13 (97 aa).

The signal sequence occupies residues 1–26 (MKRSGCWHQRMLLSLVLLTWTHVTFS). A glycan (N-linked (GlcNAc...) asparagine) is linked at Asn-33. The Kazal-like domain occupies 36-97 (RWPKPPCKMY…IQFVKYGKCE (62 aa)). Disulfide bonds link Cys-42-Cys-78, Cys-56-Cys-75, and Cys-64-Cys-96.

The protein localises to the secreted. In terms of biological role, may be a serine protease inhibitor. Essential for sperm maturation and fertility. Inhibits sperm acrosome reaction, protecting sperm from premature reaction. This chain is Serine protease inhibitor Kazal-type 13 (Spink13), found in Mus musculus (Mouse).